Consider the following 179-residue polypeptide: Large ribosomal subunit protein uL6 (179 aa).

This sequence belongs to the universal ribosomal protein uL6 family. As to quaternary structure, part of the 50S ribosomal subunit.

This protein binds to the 23S rRNA, and is important in its secondary structure. It is located near the subunit interface in the base of the L7/L12 stalk, and near the tRNA binding site of the peptidyltransferase center. The protein is Large ribosomal subunit protein uL6 of Synechocystis sp. (strain ATCC 27184 / PCC 6803 / Kazusa).